Consider the following 633-residue polypeptide: MSELNYEELGLKVGLEIHQQLNTSHKLFCNCSTNLKEDYKLTLERYLRPALSELGEVDVAALFEWKKGKKYVYRIPITTSCLVEADEEPPHAINEEALKIALAIAIALNSNIVDEIYVMRKIVIDGSNTTGFQRTAIVALGGMLKDEGVTIQTIAVEEDAARKIDERTDQVTYSLDRLGIPLIEISTGPDIRSPEQAERVALKIGQLLRMTGKVKRGIGTIRQDLNISIKGGTKIEIKGVQKLELIPDIVRYEAMRQFNLLKIKEELNKRGVSKNLILSNFVVKDLTELFKNTNSKIIKSGIEKGGLVYGIRAYKLKGILGWELIPKKRRFGTEIADYVRALAELGGLFHSDELPNYGITEEEINKVREALNATTEDGFILIVGERERLDKAVEVIRDRILLAFDGIPKETRGALDDGTTKFLRPQPSSARMYPETDIPPRRIDEKLLEDAKKFVPESPESKMKRYITLGLSEELAKEIIRDPRLDLFEELVNKYSPKVSPVVIASTITNTLKYVKSKGGDISKINEEDIEELIKSVYENKISKDSISEILLEYTTNKNVELKDVIRKYEALPTEELEKIIDDVISSNLDEIRKRKDKAVNLIMSKVMSKVKGRAEGKVILELIKSRLKNVME.

This sequence belongs to the GatB/GatE family. GatE subfamily. In terms of assembly, heterodimer of GatD and GatE.

It catalyses the reaction L-glutamyl-tRNA(Gln) + L-glutamine + ATP + H2O = L-glutaminyl-tRNA(Gln) + L-glutamate + ADP + phosphate + H(+). Allows the formation of correctly charged Gln-tRNA(Gln) through the transamidation of misacylated Glu-tRNA(Gln) in organisms which lack glutaminyl-tRNA synthetase. The reaction takes place in the presence of glutamine and ATP through an activated gamma-phospho-Glu-tRNA(Gln). The GatDE system is specific for glutamate and does not act on aspartate. This is Glutamyl-tRNA(Gln) amidotransferase subunit E from Saccharolobus islandicus (strain L.S.2.15 / Lassen #1) (Sulfolobus islandicus).